The chain runs to 408 residues: Imidazolonepropionase (408 aa).

Residues His-73 and His-75 each coordinate Fe(3+). Residues His-73 and His-75 each coordinate Zn(2+). 3 residues coordinate 4-imidazolone-5-propanoate: Arg-82, Tyr-145, and His-178. Tyr-145 lines the N-formimidoyl-L-glutamate pocket. A Fe(3+)-binding site is contributed by His-243. Residue His-243 participates in Zn(2+) binding. Gln-246 contributes to the 4-imidazolone-5-propanoate binding site. A Fe(3+)-binding site is contributed by Asp-318. Position 318 (Asp-318) interacts with Zn(2+). Residues Asn-320 and Gly-322 each coordinate N-formimidoyl-L-glutamate. Ser-323 lines the 4-imidazolone-5-propanoate pocket.

It belongs to the metallo-dependent hydrolases superfamily. HutI family. The cofactor is Zn(2+). Fe(3+) serves as cofactor.

It localises to the cytoplasm. It catalyses the reaction 4-imidazolone-5-propanoate + H2O = N-formimidoyl-L-glutamate. It participates in amino-acid degradation; L-histidine degradation into L-glutamate; N-formimidoyl-L-glutamate from L-histidine: step 3/3. Its function is as follows. Catalyzes the hydrolytic cleavage of the carbon-nitrogen bond in imidazolone-5-propanoate to yield N-formimidoyl-L-glutamate. It is the third step in the universal histidine degradation pathway. The sequence is that of Imidazolonepropionase from Shewanella woodyi (strain ATCC 51908 / MS32).